Here is a 414-residue protein sequence, read N- to C-terminus: Phosphoglycerate kinase (414 aa).

Residues 20-22 (DIN), Arg37, 60-63 (HQSR), Arg117, and Arg164 contribute to the substrate site. ATP is bound by residues Glu338 and 364 to 367 (GGHL).

Belongs to the phosphoglycerate kinase family. Monomer.

It is found in the cytoplasm. It carries out the reaction (2R)-3-phosphoglycerate + ATP = (2R)-3-phospho-glyceroyl phosphate + ADP. It participates in carbohydrate degradation; glycolysis; pyruvate from D-glyceraldehyde 3-phosphate: step 2/5. This chain is Phosphoglycerate kinase, found in Methanococcus maripaludis (strain DSM 14266 / JCM 13030 / NBRC 101832 / S2 / LL).